We begin with the raw amino-acid sequence, 703 residues long: Glycogen [starch] synthase, liver (703 aa).

S8 bears the Phosphoserine; by PKA mark. The residue at position 11 (S11) is a Phosphoserine. A UDP-binding site is contributed by K40. UDP-alpha-D-glucose contacts are provided by H205 and R211. Positions 291, 292, 294, 297, and 301 each coordinate alpha-D-glucose 6-phosphate. UDP is bound at residue R331. A UDP-alpha-D-glucose-binding site is contributed by R331. Residue H501 participates in alpha-D-glucose 6-phosphate binding. Positions 510, 512, and 513 each coordinate UDP-alpha-D-glucose. Residue T515 participates in UDP binding. Residues R582 and R586 each contribute to the alpha-D-glucose 6-phosphate site. S627 bears the Phosphoserine mark. The tract at residues 628-703 (PPTTEGFKYP…KKKLHGEYKN (76 aa)) is disordered. Residues S641, S645, S649, and S653 each carry the phosphoserine; by GSK3-alpha and GSK3-beta modification. Positions 647–657 (SGSQASSPQSS) are enriched in low complexity. Phosphoserine; by CK2 is present on S657. The segment covering 658–674 (DVEDEVEDERYDEEEEA) has biased composition (acidic residues). S683 is modified (phosphoserine).

The protein belongs to the glycosyltransferase 3 family. Part of the glycogen synthase (GS)-glycogenin complex, a heterooctamer composed of a tetramer of GS and 2 dimers of glycogenin, where each GS protomer binds to one glycogenin subunit (via glycogenin C-terminus); the GS tetramer may dissociate from glycogenin dimers to continue glycogen polymerization on its own. May also form a heterooctamer complex with GYG1 (via GYG1 C-terminus). Post-translationally, primed phosphorylation at Ser-657 (site 5) by CSNK2A1 and CSNK2A2 is required for inhibitory phosphorylation at Ser-641 (site 3a), Ser-645 (site 3b), Ser-649 (site 3c) and Ser-653 (site 4) by GSK3A an GSK3B. Dephosphorylation at Ser-641 and Ser-645 by PP1 activates the enzyme. Phosphorylation at Ser-8 is not required for interaction with GYG1. Interaction with GYG1 does not regulate the phosphorylation at Ser-8 and Ser-641. Specifically expressed in liver (at protein level).

It carries out the reaction [(1-&gt;4)-alpha-D-glucosyl](n) + UDP-alpha-D-glucose = [(1-&gt;4)-alpha-D-glucosyl](n+1) + UDP + H(+). Its pathway is glycan biosynthesis; glycogen biosynthesis. With respect to regulation, allosteric activation by glucose-6-phosphate. Phosphorylation reduces the activity towards UDP-glucose. When in the non-phosphorylated state, glycogen synthase does not require glucose-6-phosphate as an allosteric activator; when phosphorylated it does. Glycogen synthase participates in the glycogen biosynthetic process along with glycogenin and glycogen branching enzyme. Extends the primer composed of a few glucose units formed by glycogenin by adding new glucose units to it. In this context, glycogen synthase transfers the glycosyl residue from UDP-Glc to the non-reducing end of alpha-1,4-glucan. The sequence is that of Glycogen [starch] synthase, liver from Homo sapiens (Human).